A 537-amino-acid polypeptide reads, in one-letter code: uncharacterized protein (537 aa).

10 helical membrane-spanning segments follow: residues 52-72 (MALA…ALHI), 76-96 (VGLI…MLSI), 157-177 (GFFL…VSVF), 183-203 (ILAF…IIYA), 219-239 (MPLA…GVFF), 267-287 (FWRI…TVAW), 318-338 (FVNA…IYIG), 362-382 (GVPW…IMNY), 393-413 (IINL…FVHF), and 462-482 (FAAG…VIWL).

Belongs to the amino acid-polyamine-organocation (APC) superfamily.

It is found in the membrane. This is an uncharacterized protein from Schizosaccharomyces pombe (strain 972 / ATCC 24843) (Fission yeast).